A 320-amino-acid chain; its full sequence is o-succinylbenzoate synthase (320 aa).

The active-site Proton donor is lysine 133. 3 residues coordinate Mg(2+): aspartate 161, glutamate 190, and aspartate 213. The Proton acceptor role is filled by lysine 235.

Belongs to the mandelate racemase/muconate lactonizing enzyme family. MenC type 1 subfamily. The cofactor is a divalent metal cation.

It carries out the reaction (1R,6R)-6-hydroxy-2-succinyl-cyclohexa-2,4-diene-1-carboxylate = 2-succinylbenzoate + H2O. The protein operates within quinol/quinone metabolism; 1,4-dihydroxy-2-naphthoate biosynthesis; 1,4-dihydroxy-2-naphthoate from chorismate: step 4/7. It participates in quinol/quinone metabolism; menaquinone biosynthesis. Converts 2-succinyl-6-hydroxy-2,4-cyclohexadiene-1-carboxylate (SHCHC) to 2-succinylbenzoate (OSB). The polypeptide is o-succinylbenzoate synthase (Citrobacter koseri (strain ATCC BAA-895 / CDC 4225-83 / SGSC4696)).